The sequence spans 534 residues: NEDD8-activating enzyme E1 regulatory subunit (534 aa).

Alanine 2 carries the post-translational modification N-acetylalanine. N6-acetyllysine is present on residues lysine 6 and lysine 341. Residues 331–344 (DMIADSNKYIKLQN) form an interaction with UBA3 region.

Belongs to the ubiquitin-activating E1 family. ULA1 subfamily. As to quaternary structure, heterodimer of UBA3 and NAE1. The complex binds NEDD8 and UBE2M. Binds APP and TP53BP2. Ubiquitinated by TRIP12, leading to its degradation by the proteasome. In terms of tissue distribution, expressed throughout the brain. In hippocampus, strongly expressed in granule cells and in the pyramidal cell layer. Strongly expressed in the piriform cortex. In the cerebellum, expressed only in Purkinje cells.

Its subcellular location is the cell membrane. It participates in protein modification; protein neddylation. Its activity is regulated as follows. Binding of TP53BP2 to the regulatory subunit NAE1 decreases neddylation activity. Functionally, regulatory subunit of the dimeric UBA3-NAE1 E1 enzyme. E1 activates NEDD8 by first adenylating its C-terminal glycine residue with ATP, thereafter linking this residue to the side chain of the catalytic cysteine, yielding a NEDD8-UBA3 thioester and free AMP. E1 finally transfers NEDD8 to the catalytic cysteine of UBE2M. Necessary for cell cycle progression through the S-M checkpoint. Overexpression of NAE1 causes apoptosis through deregulation of NEDD8 conjugation. The covalent attachment of NEDD8 to target proteins is known as 'neddylation' and the process is involved in the regulation of cell growth, viability and development. In Rattus norvegicus (Rat), this protein is NEDD8-activating enzyme E1 regulatory subunit (Nae1).